The chain runs to 274 residues: Nuclease (274 aa).

Residues 1–24 (MGICGKLGVAALVALIVGCSPVQS) form the signal peptide. His-124 (proton acceptor) is an active-site residue. Mn(2+)-binding residues include Asn-155, Asp-246, Glu-249, Asp-255, Phe-256, Gln-265, and Glu-269.

Belongs to the DNA/RNA non-specific endonuclease family. Monomer. Mn(2+) is required as a cofactor. Mg(2+) serves as cofactor. The cofactor is Ca(2+). Requires Co(2+) as cofactor. Post-translationally, the N-terminus is blocked.

The protein localises to the periplasm. Catalyzes the degradation of both RNA and DNA; has the potential to act as an endonuclease. This Nostoc sp. (strain PCC 7120 / SAG 25.82 / UTEX 2576) protein is Nuclease (nucA).